We begin with the raw amino-acid sequence, 1337 residues long: Sister chromatid cohesion protein PDS5 homolog A (1337 aa).

Residue Met1 is modified to N-acetylmethionine. One copy of the HEAT repeat lies at 393–429 (ALVNDQLLGFVRERTLDKRWRVRKEAMMGLAQLYKKY). Ser1097 is modified (phosphoserine). Lys1146 bears the N6-acetyllysine mark. The tract at residues 1150-1337 (ATGRKPYVRS…PAERQIDLQR (188 aa)) is disordered. Positions 1159–1180 (STGTETGSNINVNSELNPSTGN) are enriched in polar residues. The residue at position 1195 (Ser1195) is a Phosphoserine. Thr1208 is subject to Phosphothreonine. Residue Lys1211 is modified to N6-acetyllysine. Over residues 1223 to 1233 (SDQATQGNISS) the composition is skewed to polar residues. An N6-acetyllysine modification is found at Lys1290. Phosphoserine is present on Ser1305. The span at 1321–1337 (DLAKKAAPAERQIDLQR) shows a compositional bias: basic and acidic residues.

The protein belongs to the PDS5 family. Interacts with the cohesin complex. Interacts with WAPL (via FGF motifs) or CDCA5 (via the FGF motif); the interaction is direct, cohesin-dependent and competitive. Interacts with SMC3. Interacts with TP63. In terms of tissue distribution, highest level in colon. Low levels in lung, ovary, breast and kidney. Reduced level in renal tumor tissue. Isoform 2 is expressed in kidney.

It is found in the nucleus. Functionally, probable regulator of sister chromatid cohesion in mitosis which may stabilize cohesin complex association with chromatin. May couple sister chromatid cohesion during mitosis to DNA replication. Cohesion ensures that chromosome partitioning is accurate in both meiotic and mitotic cells and plays an important role in DNA repair. This chain is Sister chromatid cohesion protein PDS5 homolog A, found in Homo sapiens (Human).